Consider the following 736-residue polypeptide: Microtubule-associated protein mu-2 (736 aa).

It belongs to the orthoreovirus mu-2 protein family. In terms of assembly, interacts with protein mu-NS; in viral inclusions. Interacts with polymerase lambda-3; this interaction stimulates the ATPase activity of mu-2. Requires a divalent metal cation as cofactor.

The protein localises to the virion. It localises to the host cytoplasm. It is found in the host cytoskeleton. Functionally, minor inner capsid (core) component. Displays NTPase and RNA 5'-triphosphatase (RTPase) activities. ATP is the preferred substrate for hydrolysis. May function as a cofactor of polymerase lambda-3. Associates with microtubules and plays a role in the formation, structural organization and morphology of viral inclusions, where the assembly of cores and the replication of viral RNA occur. Together with mu-NS, recruits the other core proteins to these inclusions. This Mammalia (T3D) protein is Microtubule-associated protein mu-2 (M1).